We begin with the raw amino-acid sequence, 110 residues long: UPF0213 protein DVU_3309 (110 aa).

A GIY-YIG domain is found at 8 to 83 (EVWFVYLLRC…KRQPTDQKLA (76 aa)).

It belongs to the UPF0213 family.

The polypeptide is UPF0213 protein DVU_3309 (Nitratidesulfovibrio vulgaris (strain ATCC 29579 / DSM 644 / CCUG 34227 / NCIMB 8303 / VKM B-1760 / Hildenborough) (Desulfovibrio vulgaris)).